Consider the following 127-residue polypeptide: Protein yippee-like 4 (127 aa).

The Yippee domain occupies 27-124 (RTYSCVHCRA…IEMSHMVKDN (98 aa)). Residues C31, C34, C87, and C90 each coordinate Zn(2+). Residues T92 and T93 each carry the phosphothreonine modification. Y98 carries the phosphotyrosine modification.

This sequence belongs to the yippee family.

The protein localises to the nucleus. It localises to the nucleolus. In Chlorocebus aethiops (Green monkey), this protein is Protein yippee-like 4 (YPEL4).